Consider the following 541-residue polypeptide: Coiled-coil domain-containing protein 116 (541 aa).

Residues 79 to 102 are a coiled coil; sequence QVLDSLQTVVEQATERLAAMKTEA. The segment at 346 to 397 is disordered; the sequence is LPGNSDLLQPSSKASIPTNREARGEPCDSLTTAYSPKTSHRKSKGRRGSPPN. Over residues 351 to 363 the composition is skewed to polar residues; sequence DLLQPSSKASIPT. A compositionally biased stretch (basic residues) spans 383-392; the sequence is TSHRKSKGRR. At Ser-394 the chain carries Phosphoserine.

The protein localises to the cytoplasm. It is found in the cytoskeleton. Its subcellular location is the microtubule organizing center. The protein resides in the centrosome. The polypeptide is Coiled-coil domain-containing protein 116 (Ccdc116) (Mus musculus (Mouse)).